A 123-amino-acid polypeptide reads, in one-letter code: Small ribosomal subunit protein uS12 (123 aa).

Residues 1-22 form a disordered region; it reads MATINQLVRKPRKRKAKTSDVR. Asp89 is subject to 3-methylthioaspartic acid. The tract at residues 101–123 is disordered; sequence ALDTSGVNDRKRGRSKYGTKRPK. Residues 111 to 123 show a composition bias toward basic residues; the sequence is KRGRSKYGTKRPK.

Belongs to the universal ribosomal protein uS12 family. Part of the 30S ribosomal subunit. Contacts proteins S8 and S17. May interact with IF1 in the 30S initiation complex.

Its function is as follows. With S4 and S5 plays an important role in translational accuracy. Functionally, interacts with and stabilizes bases of the 16S rRNA that are involved in tRNA selection in the A site and with the mRNA backbone. Located at the interface of the 30S and 50S subunits, it traverses the body of the 30S subunit contacting proteins on the other side and probably holding the rRNA structure together. The combined cluster of proteins S8, S12 and S17 appears to hold together the shoulder and platform of the 30S subunit. The sequence is that of Small ribosomal subunit protein uS12 from Teredinibacter turnerae (strain ATCC 39867 / T7901).